A 157-amino-acid polypeptide reads, in one-letter code: Crossover junction endodeoxyribonuclease RuvC (157 aa).

Active-site residues include Asp-7, Glu-66, and Asp-139. Mg(2+)-binding residues include Asp-7, Glu-66, and Asp-139.

It belongs to the RuvC family. As to quaternary structure, homodimer which binds Holliday junction (HJ) DNA. The HJ becomes 2-fold symmetrical on binding to RuvC with unstacked arms; it has a different conformation from HJ DNA in complex with RuvA. In the full resolvosome a probable DNA-RuvA(4)-RuvB(12)-RuvC(2) complex forms which resolves the HJ. It depends on Mg(2+) as a cofactor.

Its subcellular location is the cytoplasm. The catalysed reaction is Endonucleolytic cleavage at a junction such as a reciprocal single-stranded crossover between two homologous DNA duplexes (Holliday junction).. In terms of biological role, the RuvA-RuvB-RuvC complex processes Holliday junction (HJ) DNA during genetic recombination and DNA repair. Endonuclease that resolves HJ intermediates. Cleaves cruciform DNA by making single-stranded nicks across the HJ at symmetrical positions within the homologous arms, yielding a 5'-phosphate and a 3'-hydroxyl group; requires a central core of homology in the junction. The consensus cleavage sequence is 5'-(A/T)TT(C/G)-3'. Cleavage occurs on the 3'-side of the TT dinucleotide at the point of strand exchange. HJ branch migration catalyzed by RuvA-RuvB allows RuvC to scan DNA until it finds its consensus sequence, where it cleaves and resolves the cruciform DNA. In Campylobacter concisus (strain 13826), this protein is Crossover junction endodeoxyribonuclease RuvC.